The following is a 436-amino-acid chain: Ribosomal protein uS12 methylthiotransferase RimO (436 aa).

Positions 2-117 (RNVGIISLGC…IVDVIEEVKK (116 aa)) constitute an MTTase N-terminal domain. [4Fe-4S] cluster-binding residues include Cys-11, Cys-47, Cys-80, Cys-154, Cys-158, and Cys-161. In terms of domain architecture, Radical SAM core spans 140 to 369 (TTPPYYAYLK…MEIQKQISYE (230 aa)). Positions 372 to 436 (MSKIGTKLEV…AFEYDLVGEY (65 aa)) constitute a TRAM domain.

It belongs to the methylthiotransferase family. RimO subfamily. Requires [4Fe-4S] cluster as cofactor.

Its subcellular location is the cytoplasm. The catalysed reaction is L-aspartate(89)-[ribosomal protein uS12]-hydrogen + (sulfur carrier)-SH + AH2 + 2 S-adenosyl-L-methionine = 3-methylsulfanyl-L-aspartate(89)-[ribosomal protein uS12]-hydrogen + (sulfur carrier)-H + 5'-deoxyadenosine + L-methionine + A + S-adenosyl-L-homocysteine + 2 H(+). In terms of biological role, catalyzes the methylthiolation of an aspartic acid residue of ribosomal protein uS12. The polypeptide is Ribosomal protein uS12 methylthiotransferase RimO (Caldanaerobacter subterraneus subsp. tengcongensis (strain DSM 15242 / JCM 11007 / NBRC 100824 / MB4) (Thermoanaerobacter tengcongensis)).